The following is a 426-amino-acid chain: MLDNQLLRENPQYVATQLLKRGFQFDAVTFSQLEEKRKALQVSTQSLQNERNLRSKAIGEAKSRGENIEPMREEVNKLGAKLEQQKTELDEILKQIEVISLSLPNIPHESVPVGKDELDNQEIRKWGDVPAFSFPVKSHDELGEALGQMDFALAAKITGSRFVVMKGHLARLHRALIQFMLDIHIQQHGYQEIYVPYIVNADSLLGTGQLPKFEADLFKLTGDNGYYLTSTSEIPVTNTVREMILSAEQLPIRYVCHSPCFRSEAGSYGKDTKGMIRQHQFEKVELVWITKPEDSYNALEQLTQHAEVILQRLNLPYRVVALCTGDIGAGSAKTYDLEVWLPSQNTYREISSCSNMEAFQARRMKARFRNPDTNEIQLVHTLNGSGLAVGRTLVAIMENYQDEHGNIHIPDALKPYLGGIDIISVK.

231–233 (TSE) is a binding site for L-serine. Residue 262–264 (RSE) participates in ATP binding. Glu285 is an L-serine binding site. 349–352 (EISS) contacts ATP. Ser385 is a binding site for L-serine.

Belongs to the class-II aminoacyl-tRNA synthetase family. Type-1 seryl-tRNA synthetase subfamily. As to quaternary structure, homodimer. The tRNA molecule binds across the dimer.

It is found in the cytoplasm. It carries out the reaction tRNA(Ser) + L-serine + ATP = L-seryl-tRNA(Ser) + AMP + diphosphate + H(+). The catalysed reaction is tRNA(Sec) + L-serine + ATP = L-seryl-tRNA(Sec) + AMP + diphosphate + H(+). It participates in aminoacyl-tRNA biosynthesis; selenocysteinyl-tRNA(Sec) biosynthesis; L-seryl-tRNA(Sec) from L-serine and tRNA(Sec): step 1/1. In terms of biological role, catalyzes the attachment of serine to tRNA(Ser). Is also able to aminoacylate tRNA(Sec) with serine, to form the misacylated tRNA L-seryl-tRNA(Sec), which will be further converted into selenocysteinyl-tRNA(Sec). The protein is Serine--tRNA ligase of Legionella pneumophila (strain Paris).